Here is a 519-residue protein sequence, read N- to C-terminus: Dideacetyl fusicoccin A C-19 hydroxylase (519 aa).

The helical transmembrane segment at 16–36 threads the bilayer; sequence LPVAPILFTALAATIGAFLLS. 4 N-linked (GlcNAc...) asparagine glycosylation sites follow: Asn-177, Asn-327, Asn-414, and Asn-432. Position 454 (Cys-454) interacts with heme.

This sequence belongs to the cytochrome P450 family. Heme serves as cofactor.

The protein localises to the membrane. It functions in the pathway mycotoxin biosynthesis. In terms of biological role, cytochrome P450 monooxygenase; part of the 2 gene clusters that mediate the biosynthesis of fusicoccins, diterpene glucosides that display phytohormone-like activity and function as potent activators of plasma membrane H(+)-ATPases in plants by modifying 14-3-3 proteins and cause the plant disease constriction canker. The first step in the pathway is performed by the fusicoccadiene synthase PaFS that possesses both prenyl transferase and terpene cyclase activity, converting isopentenyl diphosphate and dimethylallyl diphosphate into geranylgeranyl diphosphate (GGDP) and successively converting GGDP into fusicocca-2,10(14)-diene, a precursor for fusicoccin H. The second step is the oxidation at the C-8 position by the cytochrome P450 monooxygenase PaP450-2 to yield fusicocca-2,10(14)-diene-8-beta-ol. The cytochrome P450 monooxygenase PaP450-1 then catalyzes the hydroxylation at the C-16 position to produce fusicocca-2,10(14)-diene-8-beta,16-diol. The dioxygenase fc-dox then catalyzes the 16-oxydation of fusicocca-2,10(14)-diene-8-beta,16-diol to yield an aldehyde (8-beta-hydroxyfusicocca-1,10(14)-dien-16-al). The short-chain dehydrogenase/reductase fc-sdr catalyzes the reduction of the aldehyde to yield fusicocca-1,10(14)-diene-8-beta,16-diol. The next step is the hydroxylation at C-9 performed by the cytochrome P450 monooxygenase PaP450-3 that leads to fusicoccin H aglycon which is glycosylated to fusicoccin H by the O-glycosyltransferase PaGT. Hydroxylation at C-12 by the cytochrome P450 monooxygenase PaP450-4 leads then to the production of fusicoccin Q and is followed by methylation by the O-methyltransferase PaMT to yield fusicoccin P. Fusicoccin P is further converted to fusicoccin J via prenylation by the O-glucose prenyltransferase PaPT. Cytochrome P450 monooxygenase PaP450-5 then performs hydroxylation at C-19 to yield dideacetyl-fusicoccin A which is acetylated to 3'-O-deacetyl-fusicoccin A by the O-acetyltransferase PaAT-2. Finally, a another acetylation by the O-acetyltransferase PaAT-1 yields fusicoccin A. The protein is Dideacetyl fusicoccin A C-19 hydroxylase of Phomopsis amygdali (Fusicoccum amygdali).